The primary structure comprises 46 residues: Protein PsbN (46 aa).

A helical membrane pass occupies residues 10-30; it reads IAITILIVLLGLTAFGVYTAF.

This sequence belongs to the PsbN family.

It is found in the cellular thylakoid membrane. Its function is as follows. May play a role in photosystem I and II biogenesis. This is Protein PsbN from Prochlorococcus marinus (strain SARG / CCMP1375 / SS120).